Reading from the N-terminus, the 472-residue chain is Siroheme synthase (472 aa).

Positions 1–204 are precorrin-2 dehydrogenase /sirohydrochlorin ferrochelatase; that stretch reads MDYLPIFTKL…GQTEKAIALM (204 aa). NAD(+)-binding positions include 22-23 and 43-44; these read SI and LE. A Phosphoserine modification is found at serine 128. The uroporphyrinogen-III C-methyltransferase stretch occupies residues 215–472; it reads GDVALVGAGP…SRDPFLVNLA (258 aa). Proline 224 is a binding site for S-adenosyl-L-methionine. Catalysis depends on aspartate 247, which acts as the Proton acceptor. Catalysis depends on lysine 269, which acts as the Proton donor. S-adenosyl-L-methionine contacts are provided by residues 300–302, isoleucine 305, 330–331, methionine 382, and glycine 411; these read GGD and TA.

This sequence in the N-terminal section; belongs to the precorrin-2 dehydrogenase / sirohydrochlorin ferrochelatase family. It in the C-terminal section; belongs to the precorrin methyltransferase family.

The enzyme catalyses uroporphyrinogen III + 2 S-adenosyl-L-methionine = precorrin-2 + 2 S-adenosyl-L-homocysteine + H(+). It carries out the reaction precorrin-2 + NAD(+) = sirohydrochlorin + NADH + 2 H(+). It catalyses the reaction siroheme + 2 H(+) = sirohydrochlorin + Fe(2+). It functions in the pathway cofactor biosynthesis; adenosylcobalamin biosynthesis; precorrin-2 from uroporphyrinogen III: step 1/1. The protein operates within cofactor biosynthesis; adenosylcobalamin biosynthesis; sirohydrochlorin from precorrin-2: step 1/1. Its pathway is porphyrin-containing compound metabolism; siroheme biosynthesis; precorrin-2 from uroporphyrinogen III: step 1/1. It participates in porphyrin-containing compound metabolism; siroheme biosynthesis; siroheme from sirohydrochlorin: step 1/1. It functions in the pathway porphyrin-containing compound metabolism; siroheme biosynthesis; sirohydrochlorin from precorrin-2: step 1/1. In terms of biological role, multifunctional enzyme that catalyzes the SAM-dependent methylations of uroporphyrinogen III at position C-2 and C-7 to form precorrin-2 via precorrin-1. Then it catalyzes the NAD-dependent ring dehydrogenation of precorrin-2 to yield sirohydrochlorin. Finally, it catalyzes the ferrochelation of sirohydrochlorin to yield siroheme. The polypeptide is Siroheme synthase (Psychromonas ingrahamii (strain DSM 17664 / CCUG 51855 / 37)).